Consider the following 250-residue polypeptide: Golgi SNAP receptor complex member 1 (250 aa).

Ala2 bears the N-acetylalanine mark. Residues 2-229 (AAGTSNYWED…QRINLRKRRD (228 aa)) lie on the Cytoplasmic side of the membrane. The stretch at 9–30 (WEDLRKQARQLENELDLKLVSF) forms a coiled coil. The disordered stretch occupies residues 38–59 (SHSSARDGGRDRYSSDTTPLLN). Positions 41–51 (SARDGGRDRYS) are enriched in basic and acidic residues. Residues 68-95 (ETMAIEIEQLLARLTGVNDKMAEYTNSA) adopt a coiled-coil conformation. Position 141 is a phosphoserine (Ser141). A helical; Anchor for type IV membrane protein membrane pass occupies residues 230–250 (SLILGGVIGICTILLLLYAFH).

The protein belongs to the GOSR1 family. Component of several multiprotein Golgi SNARE complexes. Identified in a SNARE complex with BET1, STX5 and YKT6, in a SNARE complex with BET1L, STX5 and YKT6, in a SNARE complex with STX5, GOSR2, SEC22B and BET1, and in complex with STX5 and COG3. Interacts with GABARAPL2.

The protein resides in the golgi apparatus membrane. Its function is as follows. Involved in transport from the ER to the Golgi apparatus as well as in intra-Golgi transport. It belongs to a super-family of proteins called t-SNAREs or soluble NSF (N-ethylmaleimide-sensitive factor) attachment protein receptor. May play a protective role against hydrogen peroxide induced cytotoxicity under glutathione depleted conditions in neuronal cells by regulating the intracellular ROS levels via inhibition of p38 MAPK (MAPK11, MAPK12, MAPK13 and MAPK14). Participates in docking and fusion stage of ER to cis-Golgi transport. Plays an important physiological role in VLDL-transport vesicle-Golgi fusion and thus in VLDL delivery to the hepatic cis-Golgi. The sequence is that of Golgi SNAP receptor complex member 1 (GOSR1) from Cricetulus griseus (Chinese hamster).